Here is a 181-residue protein sequence, read N- to C-terminus: NADH-quinone oxidoreductase subunit I 2 (181 aa).

4Fe-4S ferredoxin-type domains lie at 44 to 74 and 90 to 119; these read LNRY…VEGA and RVYQ…MTND. [4Fe-4S] cluster contacts are provided by C54, C57, C60, C64, C99, C102, C105, and C109.

The protein belongs to the complex I 23 kDa subunit family. In terms of assembly, NDH-1 is composed of 14 different subunits. Subunits NuoA, H, J, K, L, M, N constitute the membrane sector of the complex. [4Fe-4S] cluster serves as cofactor.

It is found in the cell membrane. It catalyses the reaction a quinone + NADH + 5 H(+)(in) = a quinol + NAD(+) + 4 H(+)(out). Functionally, NDH-1 shuttles electrons from NADH, via FMN and iron-sulfur (Fe-S) centers, to quinones in the respiratory chain. The immediate electron acceptor for the enzyme in this species is believed to be menaquinone. Couples the redox reaction to proton translocation (for every two electrons transferred, four hydrogen ions are translocated across the cytoplasmic membrane), and thus conserves the redox energy in a proton gradient. This is NADH-quinone oxidoreductase subunit I 2 from Mycolicibacterium paratuberculosis (strain ATCC BAA-968 / K-10) (Mycobacterium paratuberculosis).